The sequence spans 322 residues: Mas-related G-protein coupled receptor member X1 (322 aa).

Topologically, residues 1–30 are extracellular; it reads MDPTISSHDTESTPLNETGHPNCTPILTLS. N-linked (GlcNAc...) asparagine glycosylation occurs at asparagine 16. Residues 31–51 traverse the membrane as a helical segment; sequence FLVLITTLVGLAGNTIVLWLL. The Cytoplasmic portion of the chain corresponds to 52-59; it reads GFRMRRKA. A helical membrane pass occupies residues 60-80; sequence ISVYILNLALADSFFLCCHFI. Topologically, residues 81–100 are extracellular; that stretch reads DSLLRIIDFYGLYAHKLSKD. The helical transmembrane segment at 101–121 threads the bilayer; it reads ILGNAAIIPYISGLSILSAIS. Topologically, residues 122–142 are cytoplasmic; the sequence is TERCLCVLWPIWYHCHRPRNM. Residues 143-163 traverse the membrane as a helical segment; sequence SAIICALIWVLSFLMGILDWF. Over 164–179 the chain is Extracellular; that stretch reads SGFLGETHHHLWKNVD. A helical transmembrane segment spans residues 180 to 200; that stretch reads FIITAFLIFLFMLLSGSSLAL. Over 201–223 the chain is Cytoplasmic; it reads LLRILCGPRRKPLSRLYVTIALT. The helical transmembrane segment at 224–244 threads the bilayer; sequence VMVYLICGLPLGLYLFLLYWF. The Extracellular portion of the chain corresponds to 245-257; that stretch reads GVHLHYPFCHIYQ. Residues 258-278 traverse the membrane as a helical segment; sequence VTAVLSCVNSSANPIIYFLVG. Over 279–322 the chain is Cytoplasmic; that stretch reads SFRQHRKHRSLKRVLKRALEDTPEEDEYTDSHLHKTTEISESRY.

This sequence belongs to the G-protein coupled receptor 1 family. Mas subfamily. As to expression, expressed in a subset of IB4-positive small diameter nociceptive dorsal root neurons.

The protein resides in the cell membrane. Orphan receptor activated by neuropeptides terminating in Arg-Phe or Arg-Phe-amide. Mediates its action by association with G proteins that activate a phosphatidylinositol-calcium second messenger system. Its effect is mediated by G(q) and G(11) proteins. May regulate the function of nociceptive neurons by modulation of pain perception. The sequence is that of Mas-related G-protein coupled receptor member X1 from Mus musculus (Mouse).